A 386-amino-acid polypeptide reads, in one-letter code: 4-hydroxy-3-methylbut-2-en-1-yl diphosphate synthase (flavodoxin) (386 aa).

The [4Fe-4S] cluster site is built by cysteine 281, cysteine 284, cysteine 316, and glutamate 323.

Belongs to the IspG family. Requires [4Fe-4S] cluster as cofactor.

The enzyme catalyses (2E)-4-hydroxy-3-methylbut-2-enyl diphosphate + oxidized [flavodoxin] + H2O + 2 H(+) = 2-C-methyl-D-erythritol 2,4-cyclic diphosphate + reduced [flavodoxin]. Its pathway is isoprenoid biosynthesis; isopentenyl diphosphate biosynthesis via DXP pathway; isopentenyl diphosphate from 1-deoxy-D-xylulose 5-phosphate: step 5/6. Converts 2C-methyl-D-erythritol 2,4-cyclodiphosphate (ME-2,4cPP) into 1-hydroxy-2-methyl-2-(E)-butenyl 4-diphosphate. The polypeptide is 4-hydroxy-3-methylbut-2-en-1-yl diphosphate synthase (flavodoxin) (Corynebacterium jeikeium (strain K411)).